We begin with the raw amino-acid sequence, 459 residues long: tRNA modification GTPase MnmE (459 aa).

(6S)-5-formyl-5,6,7,8-tetrahydrofolate contacts are provided by arginine 23, glutamate 88, and arginine 127. Positions 223–381 (GLDVVIVGKP…LKEYIKDLFF (159 aa)) constitute a TrmE-type G domain. K(+) is bound at residue asparagine 233. GTP is bound by residues 233-238 (NVGKSS), 252-258 (TEIPGTT), and 277-280 (DTAG). Serine 237 contacts Mg(2+). 3 residues coordinate K(+): threonine 252, isoleucine 254, and threonine 257. Mg(2+) is bound at residue threonine 258. A (6S)-5-formyl-5,6,7,8-tetrahydrofolate-binding site is contributed by lysine 459.

This sequence belongs to the TRAFAC class TrmE-Era-EngA-EngB-Septin-like GTPase superfamily. TrmE GTPase family. Homodimer. Heterotetramer of two MnmE and two MnmG subunits. Requires K(+) as cofactor.

The protein localises to the cytoplasm. Its function is as follows. Exhibits a very high intrinsic GTPase hydrolysis rate. Involved in the addition of a carboxymethylaminomethyl (cmnm) group at the wobble position (U34) of certain tRNAs, forming tRNA-cmnm(5)s(2)U34. This is tRNA modification GTPase MnmE from Clostridium tetani (strain Massachusetts / E88).